A 130-amino-acid polypeptide reads, in one-letter code: ATP synthase epsilon chain (130 aa).

This sequence belongs to the ATPase epsilon chain family. In terms of assembly, F-type ATPases have 2 components, CF(1) - the catalytic core - and CF(0) - the membrane proton channel. CF(1) has five subunits: alpha(3), beta(3), gamma(1), delta(1), epsilon(1). CF(0) has three main subunits: a, b and c.

The protein localises to the cell inner membrane. Its function is as follows. Produces ATP from ADP in the presence of a proton gradient across the membrane. The protein is ATP synthase epsilon chain of Campylobacter lari (strain RM2100 / D67 / ATCC BAA-1060).